The primary structure comprises 212 residues: Large ribosomal subunit protein bL25 (212 aa).

The span at 1-16 shows a compositional bias: basic and acidic residues; the sequence is MKTRIDLTVEPRETGK. Residues 1–22 form a disordered region; the sequence is MKTRIDLTVEPRETGKHNSRGL.

It belongs to the bacterial ribosomal protein bL25 family. CTC subfamily. Part of the 50S ribosomal subunit; part of the 5S rRNA/L5/L18/L25 subcomplex. Contacts the 5S rRNA. Binds to the 5S rRNA independently of L5 and L18.

Its function is as follows. This is one of the proteins that binds to the 5S RNA in the ribosome where it forms part of the central protuberance. The chain is Large ribosomal subunit protein bL25 from Bdellovibrio bacteriovorus (strain ATCC 15356 / DSM 50701 / NCIMB 9529 / HD100).